The chain runs to 545 residues: ATP synthase F(1) complex subunit alpha, mitochondrial (545 aa).

5 residues coordinate ATP: Gln216, Gly218, Lys219, Thr220, and Ser221. Thr220 contributes to the Mg(2+) binding site. Asp304 serves as a coordination point for Mg(2+). The ATP site is built by Gln465 and Gln467.

This sequence belongs to the ATPase alpha/beta chains family. Homotrimer. Component of the ATP synthase complex composed at least of ATP5F1A/subunit alpha, ATP5F1B/subunit beta, ATP5MC1/subunit c (homooctomer), MT-ATP6/subunit a, MT-ATP8/subunit 8, ATP5ME/subunit e, ATP5MF/subunit f, ATP5MG/subunit g, ATP5MK/subunit k, ATP5MJ/subunit j, ATP5F1C/subunit gamma, ATP5F1D/subunit delta, ATP5F1E/subunit epsilon, ATP5PF/subunit F6, ATP5PB/subunit b, ATP5PD/subunit d, ATP5PO/subunit OSCP. ATP synthase complex consists of a soluble F(1) head domain (subunits alpha(3) and beta(3)) - the catalytic core - and a membrane F(0) domain - the membrane proton channel (subunits c, a, 8, e, f, g, k and j). These two domains are linked by a central stalk (subunits gamma, delta, and epsilon) rotating inside the F1 region and a stationary peripheral stalk (subunits F6, b, d, and OSCP).

The protein localises to the mitochondrion inner membrane. Subunit alpha, of the mitochondrial membrane ATP synthase complex (F(1)F(0) ATP synthase or Complex V) that produces ATP from ADP in the presence of a proton gradient across the membrane which is generated by electron transport complexes of the respiratory chain. ATP synthase complex consist of a soluble F(1) head domain - the catalytic core - and a membrane F(1) domain - the membrane proton channel. These two domains are linked by a central stalk rotating inside the F(1) region and a stationary peripheral stalk. During catalysis, ATP synthesis in the catalytic domain of F(1) is coupled via a rotary mechanism of the central stalk subunits to proton translocation. In vivo, can only synthesize ATP although its ATP hydrolase activity can be activated artificially in vitro. With the catalytic subunit beta (ATP5F1B), forms the catalytic core in the F(1) domain. Subunit alpha does not bear the catalytic high-affinity ATP-binding sites. This chain is ATP synthase F(1) complex subunit alpha, mitochondrial, found in Xenopus laevis (African clawed frog).